We begin with the raw amino-acid sequence, 372 residues long: Envelope phospholipase OPG057 (372 aa).

A YPPL motif is present at residues 153-156; it reads YPPL. Residues cysteine 185 and cysteine 186 are each lipidated (S-palmitoyl cysteine; by host). Residues 307–334 form the PLD phosphodiesterase domain; the sequence is FTIQNNTKLLIVDDEYVHITSANFDGTH.

Belongs to the orthopoxvirus OPG057 family. In terms of assembly, interacts with protein OPG190. Palmitoylated. Attachment of the palmitate moiety is essential for correct intracellular targeting and protein function.

The protein localises to the virion membrane. It localises to the host Golgi apparatus. The protein resides in the host trans-Golgi network. It is found in the host endoplasmic reticulum membrane. It catalyses the reaction a 1,2-diacyl-sn-glycero-3-phosphocholine + H2O = a 1,2-diacyl-sn-glycero-3-phosphate + choline + H(+). Its function is as follows. Major envelope protein that plays a role in the biogenesis of the viral double membrane and in egress of virus from the host cell. Produces the wrapped form of virus that is required for cell-to-cell spread. Acts as a lipase with broad specificity including phospholipase C, phospholipase A, and triacylglycerol lipase activities. This Homo sapiens (Human) protein is Envelope phospholipase OPG057 (OPG057).